The chain runs to 185 residues: MINQIDIKTRERMEACIQTFHNNISNIKTGRASPTLLHNIYIEYFGSKTPLRQVSNIIVEDSHTLKINVFDDSITSLIRKSILNSNLDLNPVLQGKDIIIPIPRLTEERRKQLIKVIRGDAESSRIQIRNIRRDANDKVKRLLKDKIISEDNEHTSQSKIQIMTNEYIKKIDCILEKKEKELMKF.

Belongs to the RRF family.

It is found in the cytoplasm. Its function is as follows. Responsible for the release of ribosomes from messenger RNA at the termination of protein biosynthesis. May increase the efficiency of translation by recycling ribosomes from one round of translation to another. The polypeptide is Ribosome-recycling factor (Buchnera aphidicola subsp. Acyrthosiphon pisum (strain 5A)).